The chain runs to 333 residues: Beta-ketoacyl-[acyl-carrier-protein] synthase III (333 aa).

Catalysis depends on residues Cys-116 and His-258. The segment at 259-263 (QANKR) is ACP-binding. Residue Asn-288 is part of the active site.

This sequence belongs to the thiolase-like superfamily. FabH family. Homodimer.

Its subcellular location is the cytoplasm. It catalyses the reaction malonyl-[ACP] + acetyl-CoA + H(+) = 3-oxobutanoyl-[ACP] + CO2 + CoA. It participates in lipid metabolism; fatty acid biosynthesis. In terms of biological role, catalyzes the condensation reaction of fatty acid synthesis by the addition to an acyl acceptor of two carbons from malonyl-ACP. Catalyzes the first condensation reaction which initiates fatty acid synthesis and may therefore play a role in governing the total rate of fatty acid production. Possesses both acetoacetyl-ACP synthase and acetyl transacylase activities. Its substrate specificity determines the biosynthesis of branched-chain and/or straight-chain of fatty acids. This chain is Beta-ketoacyl-[acyl-carrier-protein] synthase III, found in Koribacter versatilis (strain Ellin345).